We begin with the raw amino-acid sequence, 914 residues long: Solute carrier family 12 member 9 (914 aa).

Over 1-36 (MASESSPLLAYRLLGEEGAAFPPNGAGVSGVPSSRK) the chain is Cytoplasmic. Phosphoserine is present on S6. The helical transmembrane segment at 37-57 (LSTFLGVVVPTVLSMFSIVVF) threads the bilayer. Residues 58-72 (LRIGFVVGHAGLLQA) are Extracellular-facing. Residues 73–93 (LAMLLVAYIILALTVLSVCAI) traverse the membrane as a helical segment. Over 94–119 (ATNGAVRGGGAYFMISRTLGPEVGGS) the chain is Cytoplasmic. Residues 120–140 (IGLMFYLANVCGCAVSLLGLV) traverse the membrane as a helical segment. Residues 141-167 (ESILDVFGADATGSSGIQVLPQGYGWN) lie on the Extracellular side of the membrane. Residues 168 to 188 (LLYGSLLLGLVGGVCTLGAGL) form a helical membrane-spanning segment. Topologically, residues 189–193 (YARAS) are cytoplasmic. The helical transmembrane segment at 194–214 (FLTFLLVSGSLASVLVSFVAV) threads the bilayer. Over 215-262 (GPRNIPLAPRPGTNASSVPHRHGHFTGFNGSTLRDNLGAGYAEDYTTG) the chain is Extracellular. N228 and N243 each carry an N-linked (GlcNAc...) asparagine glycan. The helical transmembrane segment at 263–283 (AMMTFASVFAVLFNGCTGIMA) threads the bilayer. At 284–297 (GANMSGELKDPSRA) the chain is on the cytoplasmic side. Residues 298-318 (IPLGTIIAVAYTFFIYILLFF) traverse the membrane as a helical segment. The Extracellular portion of the chain corresponds to 319-338 (LSSFTCDRALLQEDYGFFRD). Residues 339–359 (ISLWPPLVLIGIYATALSASM) form a helical membrane-spanning segment. Residues 360 to 376 (SSLIGASRILHALAQDD) are Cytoplasmic-facing. A helical transmembrane segment spans residues 377–399 (LFGVILAPAKVVSGGGNPWGAVL). Topologically, residues 400–416 (YSWGLVQLVLLAGKLNT) are extracellular. The helical transmembrane segment at 417–437 (LAAVVTVFYLVAYAAVDLSCL) threads the bilayer. The Cytoplasmic portion of the chain corresponds to 438 to 466 (SLEWASAPNFRPTFSLFSWHTCLLGVASC). Residues 467 to 487 (LLMMFLISPGAAGGSLLLMGL) traverse the membrane as a helical segment. The Extracellular segment spans residues 488-740 (LSALLTARGG…LLRPRGGPGY (253 aa)). Residues 645-678 (PAFSEPAEGTREGGSPALSTLFPPPRAPGSPRAL) are disordered. The chain crosses the membrane as a helical span at residues 741-761 (VDVCGLFLLQMATILSMVPAW). Residues 762–914 (HSARLRIFLC…GVTPVTCTDL (153 aa)) lie on the Cytoplasmic side of the membrane. The segment at 844 to 864 (QGRGTVGGPGGPEGRDGEEGP) is disordered.

This sequence belongs to the SLC12A transporter family. Interacts with SLC12A1.

It localises to the cell membrane. It is found in the lysosome membrane. Functionally, may be an inhibitor of SLC12A1. Seems to correspond to a subunit of a multimeric transport system and thus, additional subunits may be required for its function. May play a role in lysosomal ion flux and osmoregulation. In Mus musculus (Mouse), this protein is Solute carrier family 12 member 9 (Slc12a9).